Consider the following 516-residue polypeptide: 3-ketoacyl-CoA synthase 4 (516 aa).

A run of 2 helical transmembrane segments spans residues 48–68 and 87–107; these read LISNLLTLCLFPLAVVISVEA and LVSIIICSAILVFGLTVYVMT. Residues 104–393 enclose the FAE domain; sequence YVMTRPRPVY…FFMTLVVKKL (290 aa). Residues C248, H327, H411, H415, H444, and N448 contribute to the active site.

Belongs to the thiolase-like superfamily. Chalcone/stilbene synthases family. As to expression, expressed at low levels in siliques, flowers, leaves and stems.

It localises to the membrane. The catalysed reaction is a very-long-chain acyl-CoA + malonyl-CoA + H(+) = a very-long-chain 3-oxoacyl-CoA + CO2 + CoA. It functions in the pathway lipid metabolism; fatty acid biosynthesis. The polypeptide is 3-ketoacyl-CoA synthase 4 (Arabidopsis thaliana (Mouse-ear cress)).